Here is an 89-residue protein sequence, read N- to C-terminus: Large ribosomal subunit protein bL27 (89 aa).

The disordered stretch occupies residues 1 to 24 (MAHKKGTGSTRNGRDSNAKRLGVK).

This sequence belongs to the bacterial ribosomal protein bL27 family.

In Synechococcus sp. (strain JA-2-3B'a(2-13)) (Cyanobacteria bacterium Yellowstone B-Prime), this protein is Large ribosomal subunit protein bL27.